The sequence spans 806 residues: Hyperosmolality-gated Ca2+ permeable channel 1.8 (806 aa).

Helical transmembrane passes span 7 to 27 (IGVSALINLFGAFLFLIAFAV), 102 to 122 (IYTLGLKIFAPVMVLALVVLV), 157 to 177 (KFFFHIAVEYIFTFWACFMLY), 375 to 395 (LVIGVSVFALVFFYMIPIAFV), 427 to 447 (FLPGLALKIFLWILPTVLLIM), 467 to 487 (YYYFMLVNVFLGSIIAGTAFE), 512 to 532 (ATFFITYIMVDGWAGIAGEIL), 576 to 596 (FLLGIVYTAVTPILLPFILIF), 626 to 646 (VHGRIIASLLISQLLLMGLLA), and 650 to 670 (AADSTPLLIILPILTLSFHKY). Residues 726 to 786 (SSSSSSEKET…HYASAYEQSS (61 aa)) form a disordered region. Over residues 731–750 (SEKETHQEETPEVRVDKHET) the composition is skewed to basic and acidic residues. Thr-735 is subject to Phosphothreonine. The segment covering 751–762 (QSSSPVTELGTS) has biased composition (polar residues). Low complexity predominate over residues 775 to 786 (SSHYASAYEQSS).

The protein belongs to the CSC1 (TC 1.A.17) family.

Its subcellular location is the golgi apparatus membrane. The protein localises to the cell membrane. Its function is as follows. Acts as an osmosensitive calcium-permeable cation channel. This chain is Hyperosmolality-gated Ca2+ permeable channel 1.8, found in Arabidopsis thaliana (Mouse-ear cress).